The chain runs to 646 residues: Envelope glycoprotein (646 aa).

The first 25 residues, 1–25 (MLSVAQSSALFLLQAICILYITKLT), serve as a signal peptide directing secretion. The Lumenal portion of the chain corresponds to 26–119 (IPTPVSEINL…INYLLRFISA (94 aa)). N-linked (GlcNAc...) asparagine; by host glycans are attached at residues Asn72, Asn80, and Asn101. Residues 120-140 (IIVYLLLSISKQGIFLFFSIV) traverse the membrane as a helical segment. Residues 141–176 (HYSFKFIKNKKSCNICGNDFYFIHIDCPKPDFTKRS) are Cytoplasmic-facing. A helical membrane pass occupies residues 177-197 (DFHMMFYIILFLSLFFVVTHA). The Lumenal segment spans residues 198-588 (DDNVYNYYEH…KNLLYIDYKK (391 aa)). Residues Asn247 and Asn336 are each glycosylated (N-linked (GlcNAc...) asparagine; by host). The helical transmembrane segment at 589-609 (IIFVFLVAIISIGIFLRSPYM) threads the bilayer. The Cytoplasmic portion of the chain corresponds to 610–646 (LLSSILKFRKRRKVVATNRSEQLVMDDDVDVFIGPPS).

G2 and G1 interact with each other. Post-translationally, specific enzymatic cleavages in vivo yield mature proteins including glycoprotein G1 and glycoprotein G2. Glycosylated. Glycosylation is essential for proper subcellular location.

Its subcellular location is the virion membrane. The protein resides in the host Golgi apparatus membrane. Glycoprotein G2 and glycoprotein G1 interact with each other and are present at the surface of the virion. They are able to attach the virion to a cell receptor and to promote fusion of membranes after endocytosis of the virion. This chain is Envelope glycoprotein, found in European mountain ash ringspot-associated virus (isolate Sorbus aucuparia) (EMARAV).